Here is a 633-residue protein sequence, read N- to C-terminus: Guanylate-binding protein 6 (633 aa).

Positions M1–C310 are GTPase domain (Globular). The 243-residue stretch at S35–R277 folds into the GB1/RHD3-type G domain. Residues G45 to S52, L67 to S69, and D97 to L101 contribute to the GTP site.

This sequence belongs to the TRAFAC class dynamin-like GTPase superfamily. GB1/RHD3 GTPase family. GB1 subfamily.

It is found in the cytoplasmic vesicle. The enzyme catalyses GTP + H2O = GDP + phosphate + H(+). Its function is as follows. Interferon (IFN)-inducible GTPase that plays important roles in innate immunity against a diverse range of bacterial, viral and protozoan pathogens, such as bacterial pathogens Listeria monocytogenes and Mycobacterium bovis BCG as well as the protozoan pathogen Toxoplasma gondii. Confers protection to several pathogens, including the bacterial pathogens Listeria monocytogenes and Mycobacterium bovis BCG as well as the protozoan pathogen Toxoplasma gondii. This is Guanylate-binding protein 6 (GBP6) from Pongo abelii (Sumatran orangutan).